The following is a 157-amino-acid chain: UPF0262 protein RHE_CH00582 (157 aa).

This sequence belongs to the UPF0262 family.

The polypeptide is UPF0262 protein RHE_CH00582 (Rhizobium etli (strain ATCC 51251 / DSM 11541 / JCM 21823 / NBRC 15573 / CFN 42)).